A 241-amino-acid polypeptide reads, in one-letter code: Accessory protein p30II (241 aa).

Short sequence motifs (nuclear localization signal) lie at residues arginine 73–arginine 78 and glycine 91–arginine 98. Composition is skewed to low complexity over residues cysteine 79–serine 100 and proline 107–serine 136. The segment at cysteine 79–threonine 151 is disordered. Residues leucine 175–arginine 184 carry the Mitochondrial targeting signal motif.

The protein belongs to the HTLV-1 accessory protein p30II family. As to quaternary structure, p30II binds to the KIX domains of CREBBP and EP300.

The protein resides in the host nucleus. It is found in the host nucleolus. Its subcellular location is the host mitochondrion inner membrane. Its function is as follows. p30II is a multifunctional regulator that sequesters EP300/CREBBP and down-regulates CREB-responsive element (CRE) and Tax-responsive element (TRE) mediated transcription. Specifically binds and represses tax/rex mRNA nuclear export. Since Tax and Rex are positive regulators of viral gene expression, their inhibition by p30II reduces virion production, and allows the virus to escape the host immune surveillance and persist latently in an immune-competent host. Functionally, p13II increases mitochondrial permeability to monovalent cations, producing a rapid, membrane potential-dependent influx of potassium. This could involve a channel-forming activity. Interferes with cell proliferation and transformation and promotes apoptosis induced by ceramide and Fas ligand, probably using the Ras signaling. This is Accessory protein p30II from Human T-cell leukemia virus 1 (strain Japan ATK-1 subtype A) (HTLV-1).